The sequence spans 186 residues: Elongation factor P (186 aa).

The protein belongs to the elongation factor P family.

The protein resides in the cytoplasm. It functions in the pathway protein biosynthesis; polypeptide chain elongation. Involved in peptide bond synthesis. Stimulates efficient translation and peptide-bond synthesis on native or reconstituted 70S ribosomes in vitro. Probably functions indirectly by altering the affinity of the ribosome for aminoacyl-tRNA, thus increasing their reactivity as acceptors for peptidyl transferase. This is Elongation factor P from Shewanella denitrificans (strain OS217 / ATCC BAA-1090 / DSM 15013).